A 197-amino-acid chain; its full sequence is Sec-independent protein translocase protein TatB (197 aa).

The chain crosses the membrane as a helical span at residues 1–21 (MFDIGFGELLLVMVLGLIVLG). A disordered region spans residues 93–197 (KRGYTETPSP…ASARQPSDSR (105 aa)). Basic and acidic residues-rich tracts occupy residues 104–113 (KSDDPKKSGD) and 160–169 (NHNDGRHATS). The segment covering 180 to 197 (PEQSQPSAASARQPSDSR) has biased composition (low complexity).

The protein belongs to the TatB family. The Tat system comprises two distinct complexes: a TatABC complex, containing multiple copies of TatA, TatB and TatC subunits, and a separate TatA complex, containing only TatA subunits. Substrates initially bind to the TatABC complex, which probably triggers association of the separate TatA complex to form the active translocon.

It is found in the cell inner membrane. In terms of biological role, part of the twin-arginine translocation (Tat) system that transports large folded proteins containing a characteristic twin-arginine motif in their signal peptide across membranes. Together with TatC, TatB is part of a receptor directly interacting with Tat signal peptides. TatB may form an oligomeric binding site that transiently accommodates folded Tat precursor proteins before their translocation. The polypeptide is Sec-independent protein translocase protein TatB (Pectobacterium atrosepticum (strain SCRI 1043 / ATCC BAA-672) (Erwinia carotovora subsp. atroseptica)).